Here is a 376-residue protein sequence, read N- to C-terminus: Zinc-regulated transporter 1 (376 aa).

Topologically, residues 1 to 50 (MSNVTTPWWKQWDPSEVTLADKTPDDVWKTCVLQGVYFGGNEYNGNLGAR) are extracellular. The chain crosses the membrane as a helical span at residues 51 to 71 (ISSVFVILFVSTFFTMFPLIS). Residues 72–80 (TKVKRLRIP) are Cytoplasmic-facing. The helical transmembrane segment at 81 to 101 (LYVYLFAKYFGSGVIVATAFI) threads the bilayer. Residues 102 to 122 (HLMDPAYGAIGGTTCVGQTGN) lie on the Extracellular side of the membrane. The chain crosses the membrane as a helical span at residues 123–143 (WGLYSWCPAIMLTSLTFTFLT). Residues 144–216 (DLFSSVWVER…TSMDVVQSFQ (73 aa)) lie on the Cytoplasmic side of the membrane. The segment covering 177–191 (VSSENDNENGTANGS) has biased composition (polar residues). The tract at residues 177-196 (VSSENDNENGTANGSHDTKN) is disordered. Residues 217–237 (AQFYAFLILEFGVIFHSVMIG) traverse the membrane as a helical segment. Residues 238–242 (LNLGS) are Extracellular-facing. Residues 243 to 263 (VGDEFSSLYPVLVFHQSFEGL) form a helical membrane-spanning segment. Residues 264-278 (GIGARLSAIEFPRSK) lie on the Cytoplasmic side of the membrane. A helical membrane pass occupies residues 279 to 299 (RWWPWALCVAYGLTTPICVAI). Over 300-310 (GLGVRTRYVSG) the chain is Extracellular. The chain crosses the membrane as a helical span at residues 311–331 (SYTALVISGVLDAISAGILLY). The Cytoplasmic segment spans residues 332 to 354 (TGLVELLARDFIFNPQRTKDLRE). The chain crosses the membrane as a helical span at residues 355-375 (LSFNVICTLFGAGIMALIGKW). Residue alanine 376 is a topological domain, extracellular.

It belongs to the ZIP transporter (TC 2.A.5) family.

Its subcellular location is the membrane. High-affinity zinc transport protein. The chain is Zinc-regulated transporter 1 (ZRT1) from Saccharomyces cerevisiae (strain ATCC 204508 / S288c) (Baker's yeast).